The chain runs to 658 residues: Threonine--tRNA ligase (658 aa).

A TGS domain is found at 1–64; that stretch reads MSCSVSLSFP…GQSGQIEIIT (64 aa). Residues 246–549 form a catalytic region; the sequence is DHRRLGREMD…LIENFAGHMP (304 aa). Zn(2+) contacts are provided by Cys343, His394, and His526.

The protein belongs to the class-II aminoacyl-tRNA synthetase family. Homodimer. It depends on Zn(2+) as a cofactor.

Its subcellular location is the cytoplasm. It carries out the reaction tRNA(Thr) + L-threonine + ATP = L-threonyl-tRNA(Thr) + AMP + diphosphate + H(+). In terms of biological role, catalyzes the attachment of threonine to tRNA(Thr) in a two-step reaction: L-threonine is first activated by ATP to form Thr-AMP and then transferred to the acceptor end of tRNA(Thr). Also edits incorrectly charged L-seryl-tRNA(Thr). This Bartonella quintana (strain Toulouse) (Rochalimaea quintana) protein is Threonine--tRNA ligase.